A 595-amino-acid chain; its full sequence is Arginine--tRNA ligase (595 aa).

The 'HIGH' region signature appears at 132 to 142 (ANPTGPLHVGH).

The protein belongs to the class-I aminoacyl-tRNA synthetase family. As to quaternary structure, monomer.

It is found in the cytoplasm. The enzyme catalyses tRNA(Arg) + L-arginine + ATP = L-arginyl-tRNA(Arg) + AMP + diphosphate. The chain is Arginine--tRNA ligase from Cupriavidus taiwanensis (strain DSM 17343 / BCRC 17206 / CCUG 44338 / CIP 107171 / LMG 19424 / R1) (Ralstonia taiwanensis (strain LMG 19424)).